The sequence spans 665 residues: Coiled-coil domain-containing protein 138 (665 aa).

T48 bears the Phosphothreonine mark. At S49 the chain carries Phosphoserine. A coiled-coil region spans residues 198-323 (QQKFAEELQK…YEFMTIQRLK (126 aa)). A Phosphoserine modification is found at S469.

The protein is Coiled-coil domain-containing protein 138 (CCDC138) of Homo sapiens (Human).